We begin with the raw amino-acid sequence, 209 residues long: Uracil phosphoribosyltransferase (209 aa).

5-phospho-alpha-D-ribose 1-diphosphate contacts are provided by residues R79, R104, and 131–139 (DPMLATGGS). Uracil-binding positions include I194 and 199 to 201 (GDA). D200 is a binding site for 5-phospho-alpha-D-ribose 1-diphosphate.

It belongs to the UPRTase family. Mg(2+) is required as a cofactor.

It carries out the reaction UMP + diphosphate = 5-phospho-alpha-D-ribose 1-diphosphate + uracil. It functions in the pathway pyrimidine metabolism; UMP biosynthesis via salvage pathway; UMP from uracil: step 1/1. With respect to regulation, allosterically activated by GTP. In terms of biological role, catalyzes the conversion of uracil and 5-phospho-alpha-D-ribose 1-diphosphate (PRPP) to UMP and diphosphate. The chain is Uracil phosphoribosyltransferase from Streptococcus thermophilus (strain CNRZ 1066).